Reading from the N-terminus, the 408-residue chain is Exodeoxyribonuclease 7 large subunit (408 aa).

This sequence belongs to the XseA family. Heterooligomer composed of large and small subunits.

The protein localises to the cytoplasm. It carries out the reaction Exonucleolytic cleavage in either 5'- to 3'- or 3'- to 5'-direction to yield nucleoside 5'-phosphates.. Its function is as follows. Bidirectionally degrades single-stranded DNA into large acid-insoluble oligonucleotides, which are then degraded further into small acid-soluble oligonucleotides. The polypeptide is Exodeoxyribonuclease 7 large subunit (Alkaliphilus oremlandii (strain OhILAs) (Clostridium oremlandii (strain OhILAs))).